Consider the following 304-residue polypeptide: Small glutamine-rich tetratricopeptide repeat-containing protein beta (304 aa).

4 TPR repeats span residues 15–49 (LREQSQMDAYTSDEQESLEVAIQCLETVFKISPED), 85–118 (ADQLKDEGNNHMKEENYAAAVDCYTQAIELDPNN), 120–152 (VYYCNRAAAQSKLSHYTDAIKDCEKAIAIDSKY), and 153–186 (SKAYGRMGLALTAMNKFEEAVTSYQKALDLDPEN). Lys131 bears the N6-acetyllysine mark. Phosphoserine occurs at positions 293, 295, and 297.

Belongs to the SGT family. In terms of assembly, homooligomerize. In terms of tissue distribution, expressed specifically in brain.

Its function is as follows. Co-chaperone that binds directly to HSC70 and HSP70 and regulates their ATPase activity. The sequence is that of Small glutamine-rich tetratricopeptide repeat-containing protein beta (Sgtb) from Rattus norvegicus (Rat).